We begin with the raw amino-acid sequence, 330 residues long: Mas-related G-protein coupled receptor member X2 (330 aa).

The Extracellular portion of the chain corresponds to 1–33; it reads MDPTTLVWGTESTTMNGNDQALPLLCGKETLIL. Residues 34 to 54 form a helical membrane-spanning segment; it reads VVLILFIALVGLVGNAFVLWL. The Cytoplasmic portion of the chain corresponds to 55-63; it reads LGFRMRRNA. A helical transmembrane segment spans residues 64-84; it reads FSVYVLSLAGADFLFLCFPMI. At 85-96 the chain is on the extracellular side; that stretch reads NCLAYLINFFHS. The chain crosses the membrane as a helical span at residues 97-117; that stretch reads ISINFPSFFTTVMTCAYLAGL. At 118-144 the chain is on the cytoplasmic side; that stretch reads SMLSAISTERCLSVLWPIWYRSRRPRH. Residues 145 to 165 form a helical membrane-spanning segment; sequence LSAVMCVLLWALSLLLSILEG. Over 166 to 184 the chain is Extracellular; that stretch reads KFCGFLFSDGDSGWCQTFD. Residues 185–205 form a helical membrane-spanning segment; the sequence is FITAAWLMFLFVVLCGSSLAL. Residues 206–228 are Cytoplasmic-facing; that stretch reads LVRILCGSRGLPLTRLYLTILLT. The helical transmembrane segment at 229–249 threads the bilayer; it reads VLIFLLCGLPFGIQWFLILWI. At 250–264 the chain is on the extracellular side; that stretch reads WKNSDVLFCHIHPVS. A helical membrane pass occupies residues 265–285; sequence VVLSSFNSSANPIIYFFVGSF. The Cytoplasmic segment spans residues 286 to 330; sequence RKQWRLRQPVLKLALQRALQDTAEVDHSEGCFSQGTLEMSGSSLV.

This sequence belongs to the G-protein coupled receptor 1 family. Mas subfamily.

The protein resides in the cell membrane. Functionally, mast cell-specific receptor for basic secretagogues, i.e. cationic amphiphilic drugs, as well as endo- or exogenous peptides, consisting of a basic head group and a hydrophobic core. Recognizes and binds small molecules containing a cyclized tetrahydroisoquinoline (THIQ), such as non-steroidal neuromuscular blocking drugs (NMBDs), including tubocurarine and atracurium. In response to these compounds, mediates pseudo-allergic reactions characterized by histamine release, inflammation and airway contraction. This Trachypithecus francoisi (Francois' leaf monkey) protein is Mas-related G-protein coupled receptor member X2 (MRGPRX2).